The sequence spans 428 residues: Ammonium transporter AmtB (428 aa).

Positions 1–22 (MKIATIKTGLASLAMLPGLVMA) are cleaved as a signal peptide. At 23-32 (APAVADKADN) the chain is on the periplasmic side. Residues 33 to 54 (AFMMICTALVLFMTIPGIALFY) traverse the membrane as a helical segment. The Cytoplasmic segment spans residues 55-65 (GGLIRGKNVLS). The helical transmembrane segment at 66-90 (MLTQVTVTFALVCILWVVYGYSLAF) threads the bilayer. At 91-119 (GEGNNFFGNINWLMLKNIELTAVMGSIYQ) the chain is on the periplasmic side. A helical membrane pass occupies residues 120–142 (YIHVAFQGSFACITVGLIVGALA). The Cytoplasmic segment spans residues 143 to 146 (ERIR). A helical transmembrane segment spans residues 147–171 (FSAVLIFVVVWLTLSYIPIAHMVWG). Over 172–185 (GGLLASHGALDFAG) the chain is Periplasmic. The helical transmembrane segment at 186 to 201 (GTVVHINAAIAGLVGA) threads the bilayer. The Cytoplasmic segment spans residues 202 to 221 (YLIGKRVGFGKEAFKPHNLP). The helical transmembrane segment at 222–241 (MVFTGTAILYIGWFGFNAGS) threads the bilayer. Position 241 (Ser241) interacts with NH4(+). The Periplasmic segment spans residues 242–248 (AGTANEI). A helical membrane pass occupies residues 249-273 (AALAFVNTVVATAAAILGWIFGEWA). The Cytoplasmic portion of the chain corresponds to 274 to 279 (LRGKPS). A helical transmembrane segment spans residues 280 to 300 (LLGACSGAIAGLVGVTPACGY). The Periplasmic segment spans residues 301–302 (IG). A helical transmembrane segment spans residues 303–321 (VGGALIIGVVAGLAGLWGV). Topologically, residues 322 to 333 (TMLKRLLRVDDP) are cytoplasmic. Residues 334–355 (CDVFGVHGVCGIVGCIMTGIFA) traverse the membrane as a helical segment. Over 356–370 (ASSLGGVGFAEGVTM) the chain is Periplasmic. A helical membrane pass occupies residues 371–399 (GHQLLVQLESIAITIVWSGVVAFIGYKLA). Residues 400–428 (DLTVGLRVPEEQEREGLDVNSHGENAYNA) lie on the Cytoplasmic side of the membrane.

This sequence belongs to the ammonia transporter channel (TC 1.A.11.2) family. In terms of assembly, homotrimer. In response to elevation of the extracellular ammonium concentration, interacts and forms a complex with GlnK.

It is found in the cell inner membrane. With respect to regulation, in the presence of high extracellular ammonium concentrations, transport activity is inhibited by interaction with the regulatory protein GlnK. Formation of the GlnK-AmtB complex is influenced by intracellular pools of the effector molecules ATP, ADP, Mg(2+) and 2-oxoglutarate. The GlnK-AmtB interaction is also controlled by the level of intracellular glutamine and the uridylylation status of GlnK. Its function is as follows. Involved in the uptake of ammonium/ammonia (NH(4)(+)/NH(3)). Transport is electrogenic. Following sequestration of NH(4)(+) at the periplasmic face, NH(4)(+) is deprotonated and neutral NH(3) is transported into the cytoplasm. Neutral NH(3) and charged H(+) are carried separately across the membrane on a unique two-lane pathway, before recombining to NH(4)(+) inside the cell. This is Ammonium transporter AmtB (amtB) from Escherichia coli O157:H7.